We begin with the raw amino-acid sequence, 639 residues long: Sperm-associated antigen 16 protein (639 aa).

A coiled-coil region spans residues 146–218 (DVYSQVMLLE…GLKLHYASYE (73 aa)). A disordered region spans residues 280–333 (RESGDRAGHSCEKENSSEGPTQKSLREAREEVGYKSKLKNEKKDSEFPVDMQPD). 2 stretches are compositionally biased toward basic and acidic residues: residues 281–295 (ESGDRAGHSCEKENS) and 303–325 (SLREAREEVGYKSKLKNEKKDSE). WD repeat units lie at residues 358-397 (LHELPVSCIVMHPCRDYLISCSEDRLWKMVGLPQGNVLLT), 400-439 (GHTDWLSGCCFHPSGSKLATSSGDSTIKLWDLNKGECTLT), 442-481 (GHNHAVWSCTWHSCGDFVASASLDMTSKIWDVNSERCRYT), 484-523 (GHTDSVNSIEFFPFSNILLTASADKTLSVWDARTGKCEQS), 526-565 (GHMHSVNDATFTPRGHIIASCDARGVTKLWDFRKLIPIVS), 568-608 (VGPS…HKLV), and 609-639 (GHESEVHSVVFSHLGENLYSGGSDGTIRLWI).

In terms of assembly, interacts with SPAG6 and STK36. In terms of processing, phosphorylated by TSSK2. Expressed in testis.

The protein resides in the cytoplasm. It localises to the cytoskeleton. The protein localises to the cilium axoneme. Its subcellular location is the flagellum axoneme. It is found in the cell projection. The protein resides in the cilium. It localises to the flagellum. Functionally, necessary for sperm flagellar function. Plays a role in motile ciliogenesis. May help to recruit STK36 to the cilium or apical surface of the cell to initiate subsequent steps of construction of the central pair apparatus of motile cilia. This chain is Sperm-associated antigen 16 protein (Spag16), found in Mus musculus (Mouse).